The primary structure comprises 26 residues: uncharacterized protein (26 aa).

It is found in the plastid. The protein localises to the chloroplast. This is an uncharacterized protein from Trieres chinensis (Marine centric diatom).